A 620-amino-acid polypeptide reads, in one-letter code: 1-deoxy-D-xylulose-5-phosphate synthase (620 aa).

Thiamine diphosphate is bound by residues H80 and 121-123 (GHS). D152 is a binding site for Mg(2+). Residues 153–154 (GA), N181, Y288, and E370 each bind thiamine diphosphate. A Mg(2+)-binding site is contributed by N181.

Belongs to the transketolase family. DXPS subfamily. In terms of assembly, homodimer. Mg(2+) is required as a cofactor. It depends on thiamine diphosphate as a cofactor.

It catalyses the reaction D-glyceraldehyde 3-phosphate + pyruvate + H(+) = 1-deoxy-D-xylulose 5-phosphate + CO2. Its pathway is metabolic intermediate biosynthesis; 1-deoxy-D-xylulose 5-phosphate biosynthesis; 1-deoxy-D-xylulose 5-phosphate from D-glyceraldehyde 3-phosphate and pyruvate: step 1/1. Catalyzes the acyloin condensation reaction between C atoms 2 and 3 of pyruvate and glyceraldehyde 3-phosphate to yield 1-deoxy-D-xylulose-5-phosphate (DXP). This chain is 1-deoxy-D-xylulose-5-phosphate synthase, found in Shigella sonnei (strain Ss046).